Reading from the N-terminus, the 137-residue chain is Large ribosomal subunit protein eL28 (137 aa).

Residue serine 2 is modified to N-acetylserine. Residues lysine 58 and lysine 65 each participate in a glycyl lysine isopeptide (Lys-Gly) (interchain with G-Cter in SUMO2) cross-link. Residue serine 115 is modified to Phosphoserine.

This sequence belongs to the eukaryotic ribosomal protein eL28 family. In terms of assembly, component of the large ribosomal subunit.

It localises to the cytoplasm. Component of the large ribosomal subunit. The ribosome is a large ribonucleoprotein complex responsible for the synthesis of proteins in the cell. This is Large ribosomal subunit protein eL28 (RPL28) from Oryctolagus cuniculus (Rabbit).